We begin with the raw amino-acid sequence, 359 residues long: Doublesex- and mab-3-related transcription factor B1 (359 aa).

The segment at residues 7-54 (CSRCRNHGYLVPVKGHTGKCRWKQCICDKCYLITERQKIMAAQKVLRT) is a DNA-binding region (DM). 2 disordered regions span residues 111–149 (PPQAPSPGPSTFQLGPSGRPGPSTFQPGPGAPGGLRDRS) and 262–359 (SGLV…EQSN). Composition is skewed to pro residues over residues 277–299 (CSPPPPPPPPPPPPLPAPPPQPQ) and 315–325 (LPPPPPPPSPP). Residues 348-359 (EPSQDSPQEQSN) are compositionally biased toward polar residues.

Belongs to the DMRT family. As to expression, brain.

The protein resides in the nucleus. In Mus musculus (Mouse), this protein is Doublesex- and mab-3-related transcription factor B1 (Dmrtb1).